Here is a 119-residue protein sequence, read N- to C-terminus: Ribonuclease P protein component (119 aa).

Belongs to the RnpA family. Consists of a catalytic RNA component (M1 or rnpB) and a protein subunit.

The enzyme catalyses Endonucleolytic cleavage of RNA, removing 5'-extranucleotides from tRNA precursor.. In terms of biological role, RNaseP catalyzes the removal of the 5'-leader sequence from pre-tRNA to produce the mature 5'-terminus. It can also cleave other RNA substrates such as 4.5S RNA. The protein component plays an auxiliary but essential role in vivo by binding to the 5'-leader sequence and broadening the substrate specificity of the ribozyme. The polypeptide is Ribonuclease P protein component (Salmonella paratyphi A (strain AKU_12601)).